Reading from the N-terminus, the 224-residue chain is Ribonuclease HII (224 aa).

The RNase H type-2 domain maps to 1 to 210 (MKIGGIDEAG…VRKIEESIKA (210 aa)). Residues Asp-7, Glu-8, and Asp-105 each contribute to the a divalent metal cation site.

Belongs to the RNase HII family. The cofactor is Mn(2+). Requires Mg(2+) as cofactor.

Its subcellular location is the cytoplasm. It carries out the reaction Endonucleolytic cleavage to 5'-phosphomonoester.. Endonuclease that specifically degrades the RNA of RNA-DNA hybrids. The chain is Ribonuclease HII from Pyrococcus furiosus (strain ATCC 43587 / DSM 3638 / JCM 8422 / Vc1).